Here is a 62-residue protein sequence, read N- to C-terminus: Photosystem II reaction center protein Z (62 aa).

2 helical membrane passes run Leu-8–Ala-28 and Tyr-41–Val-61.

This sequence belongs to the PsbZ family. As to quaternary structure, PSII is composed of 1 copy each of membrane proteins PsbA, PsbB, PsbC, PsbD, PsbE, PsbF, PsbH, PsbI, PsbJ, PsbK, PsbL, PsbM, PsbT, PsbX, PsbY, PsbZ, Psb30/Ycf12, at least 3 peripheral proteins of the oxygen-evolving complex and a large number of cofactors. It forms dimeric complexes.

It localises to the plastid. The protein localises to the chloroplast thylakoid membrane. May control the interaction of photosystem II (PSII) cores with the light-harvesting antenna, regulates electron flow through the 2 photosystem reaction centers. PSII is a light-driven water plastoquinone oxidoreductase, using light energy to abstract electrons from H(2)O, generating a proton gradient subsequently used for ATP formation. This Pyropia yezoensis (Susabi-nori) protein is Photosystem II reaction center protein Z.